The primary structure comprises 428 residues: Light-independent protochlorophyllide reductase subunit N (428 aa).

[4Fe-4S] cluster-binding residues include Cys-29, Cys-54, and Cys-115.

It belongs to the BchN/ChlN family. In terms of assembly, protochlorophyllide reductase is composed of three subunits; BchL, BchN and BchB. Forms a heterotetramer of two BchB and two BchN subunits. The cofactor is [4Fe-4S] cluster.

The enzyme catalyses chlorophyllide a + oxidized 2[4Fe-4S]-[ferredoxin] + 2 ADP + 2 phosphate = protochlorophyllide a + reduced 2[4Fe-4S]-[ferredoxin] + 2 ATP + 2 H2O. It functions in the pathway porphyrin-containing compound metabolism; bacteriochlorophyll biosynthesis (light-independent). Its function is as follows. Component of the dark-operative protochlorophyllide reductase (DPOR) that uses Mg-ATP and reduced ferredoxin to reduce ring D of protochlorophyllide (Pchlide) to form chlorophyllide a (Chlide). This reaction is light-independent. The NB-protein (BchN-BchB) is the catalytic component of the complex. The chain is Light-independent protochlorophyllide reductase subunit N from Cereibacter sphaeroides (strain KD131 / KCTC 12085) (Rhodobacter sphaeroides).